A 134-amino-acid chain; its full sequence is uncharacterized protein (134 aa).

The segment at Val-59 to Gly-92 is disordered. Residues Lys-61–Gly-71 show a composition bias toward basic residues. Over residues Lys-73–Arg-87 the composition is skewed to basic and acidic residues.

This is an uncharacterized protein from Saccharomyces cerevisiae (strain ATCC 204508 / S288c) (Baker's yeast).